A 1299-amino-acid polypeptide reads, in one-letter code: MGNKRFRSDNNAGKPTSVEATRIWATKVIEDFRASGNEVYTFEHNLSNNERGVIHQMCRKMGIQSKSSGRGEQRRLSIFKSRHKNGNKNEANEKSNKEKLKCVSFPPGADVILQELFTHYPPCDGDTAATSFTKYSGNKGKQGQWKDDFFRKPQISSEEILEKVASLSSRLKKDKALKEITKLRSKLPITSFKDAITSAVESNQVILISGETGCGKTTQVPQYLLDHMWSSKRETCKIVCTQPRRISAMSVSERISCERGESIGENIGYKVRLQSKGGRHSSVVFCTNGILLRVLVGKGSVSSVSDITHIIVDEIHERDCYSDFMLAIIRDLLPSNPHLRLILMSATLDAERFSGYFGGCPVVRVPGFTYPVRTLYLEDVLSILKSGGDNHLSSTNLSISDHKLDLTDEDKLALDEAIILAWTNDEFDALLDLVSSRGSHEIYNYQHQSTWLTPLMVFAGKGRISDVCMLLSFGADWSLKSKDGMTALELAEAENQLEAAQIIREHADNSQSNSQQGQQLLDKYMATINPEQVDVSLIQQLMRKICGDSEDGAILVFLPGWDDINKTRQRLLENPFFADSAKFDIICLHSMVPAGEQKKVFNRPPPGCRKIVLATNIAESAVTIDDVVYVIDSGRMKEKSYDPYNNVSTLQSSWVSKANAKQRQGRAGRCQPGICYHLYSRLRAASMPDFKVPEIKRMPVEELCLQVKILDPNCKTNDFLQKLLDPPVDQSIANALSILQDIGALTPQEELTELGEKFGHLPVHPLISKMLFFAVLVNCLDPALTLACAADYKEPFTMPMSPVERQKAAAAKLELASLCGGDSDHLAVVAAFECWKNAKGRGLSAEFCSQYFVSPSAMKMLDQMRSQLESELKRHGIIPNDISSCSQNSRDPGILRAVLAVGLYPMVGRLCPAFGNNRRTIVETASGAKVRVHSLSNNFNLSSKKYDESLLVFDEITRGDGGMHIRNCTVARDLPLLLISTEIAVAPTGSSDSDDSNEEEEDDEEVAANTNEEVAANTNEEGMDIHKEESRRGAKMMSSPENSVKLVVDRWLPFRTTALEVAQMYILRERLMASILFKVTHPREHLPPHLGASMHAIAGILSYDGHAGLSCPPESMVPKHSRTEMYDTGGWEEKPNSFLNSLFWSLSLKENKHPSHTNRNQQHNYNMAPTEAASIPRQQNYKQRNPKATNNTDSGKKKEKMFVNPTNRINQPEAASTGKPSKHKSANSSGSSNKKENMPSDQAYGNKQHNTVPREAAAPMAKNQSSKKTKTRSGNNSDSGKKKEQYIPKRQREDKAEQK.

The R3H domain maps to 15-82 (PTSVEATRIW…QRRLSIFKSR (68 aa)). One can recognise a Helicase ATP-binding domain in the interval 197–366 (TSAVESNQVI…FGGCPVVRVP (170 aa)). Position 210–217 (210–217 (GETGCGKT)) interacts with ATP. The short motif at 313 to 316 (DEIH) is the DEIH box element. One can recognise a Helicase C-terminal domain in the interval 537–711 (LIQQLMRKIC…ELCLQVKILD (175 aa)). 2 disordered regions span residues 987 to 1039 (PTGS…MMSS) and 1175 to 1299 (IPRQ…AEQK). Acidic residues predominate over residues 992-1006 (DSDDSNEEEEDDEEV). The span at 1007–1020 (AANTNEEVAANTNE) shows a compositional bias: low complexity. The segment covering 1023 to 1032 (MDIHKEESRR) has biased composition (basic and acidic residues). 3 stretches are compositionally biased toward polar residues: residues 1176-1193 (PRQQNYKQRNPKATNNTD), 1204-1214 (NPTNRINQPEA), and 1239-1251 (PSDQAYGNKQHNT). Positions 1182–1200 (KQRNPKATNNTDSGKKKEK) match the Bipartite nuclear localization signal motif. The short motif at 1267–1283 (KKTKTRSGNNSDSGKKK) is the Bipartite nuclear localization signal element. A compositionally biased stretch (basic and acidic residues) spans 1279-1299 (SGKKKEQYIPKRQREDKAEQK).

Belongs to the DExH box helicase family. Specifically expressed in the tapetum and vascular tissues.

The protein localises to the nucleus. It carries out the reaction ATP + H2O = ADP + phosphate + H(+). Its function is as follows. May function as an ATP-dependent RNA/DNA helicase. In Arabidopsis thaliana (Mouse-ear cress), this protein is DExH-box ATP-dependent RNA helicase DExH6.